Here is a 336-residue protein sequence, read N- to C-terminus: Ribosomal RNA small subunit methyltransferase C (336 aa).

It belongs to the methyltransferase superfamily. RsmC family. As to quaternary structure, monomer.

It localises to the cytoplasm. The enzyme catalyses guanosine(1207) in 16S rRNA + S-adenosyl-L-methionine = N(2)-methylguanosine(1207) in 16S rRNA + S-adenosyl-L-homocysteine + H(+). Its function is as follows. Specifically methylates the guanine in position 1207 of 16S rRNA in the 30S particle. This Hamiltonella defensa subsp. Acyrthosiphon pisum (strain 5AT) protein is Ribosomal RNA small subunit methyltransferase C.